Reading from the N-terminus, the 300-residue chain is Urease accessory protein UreD (300 aa).

The protein belongs to the UreD family. As to quaternary structure, ureD, UreF and UreG form a complex that acts as a GTP-hydrolysis-dependent molecular chaperone, activating the urease apoprotein by helping to assemble the nickel containing metallocenter of UreC. The UreE protein probably delivers the nickel.

Its subcellular location is the cytoplasm. Its function is as follows. Required for maturation of urease via the functional incorporation of the urease nickel metallocenter. This is Urease accessory protein UreD from Prochlorococcus marinus (strain MIT 9215).